A 451-amino-acid polypeptide reads, in one-letter code: Zinc metalloproteinase nas-16 (451 aa).

The region spanning 70–273 (QVVTKLFSPQ…LTINTAYNCK (204 aa)) is the Peptidase M12A domain. 4 cysteine pairs are disulfide-bonded: Cys127/Cys272, Cys148/Cys167, Cys274/Cys291, and Cys296/Cys305. N-linked (GlcNAc...) asparagine glycosylation is present at Asn133. His175 contributes to the Zn(2+) binding site. Glu176 is a catalytic residue. 2 residues coordinate Zn(2+): His179 and His185. Positions 267–306 (NTAYNCKCPSELLCANGGYTNPSNCLECICPLGYGGVLCD) constitute an EGF-like domain. N-linked (GlcNAc...) asparagine glycosylation is found at Asn363 and Asn438.

The cofactor is Zn(2+).

It is found in the secreted. In terms of biological role, metalloprotease. The chain is Zinc metalloproteinase nas-16 (nas-16) from Caenorhabditis elegans.